We begin with the raw amino-acid sequence, 278 residues long: ATP synthase subunit a (278 aa).

The next 6 helical transmembrane spans lie at 43-63 (TWHI…LWIF), 104-124 (IAPL…MDMI), 148-168 (DVNI…FYSI), 191-211 (IPVN…SLAL), 222-242 (LIFI…TLGV), and 249-269 (LIFH…LTIV).

Belongs to the ATPase A chain family. F-type ATPases have 2 components, CF(1) - the catalytic core - and CF(0) - the membrane proton channel. CF(1) has five subunits: alpha(3), beta(3), gamma(1), delta(1), epsilon(1). CF(0) has three main subunits: a(1), b(2) and c(9-12). The alpha and beta chains form an alternating ring which encloses part of the gamma chain. CF(1) is attached to CF(0) by a central stalk formed by the gamma and epsilon chains, while a peripheral stalk is formed by the delta and b chains.

It localises to the cell inner membrane. Its function is as follows. Key component of the proton channel; it plays a direct role in the translocation of protons across the membrane. The chain is ATP synthase subunit a from Shewanella baltica (strain OS185).